Reading from the N-terminus, the 69-residue chain is Beta-defensin 114 (69 aa).

The first 26 residues, 1–26 (MRIFYYLHFLCYVTFILPATCTLVNA), serve as a signal peptide directing secretion. Cystine bridges form between Cys29–Cys57, Cys36–Cys50, and Cys40–Cys58.

The protein belongs to the beta-defensin family. In terms of tissue distribution, expressed in epididymis, predominantly in the caput (at protein level).

The protein resides in the secreted. Has a salt-sensitive antimicrobial activity against Gram-negative bacteria, including E.coli, Gram-positive, including S.aureus, and fungi, including C.albicans. Binds to and neutralizes bacterial lipopolysaccharides (LPS), abolishing TNF production by macrophages challenged with LPS. Rescues the LPS-induced reduction of sperm motility in vitro and may protect from LPS-induced lethality. This Homo sapiens (Human) protein is Beta-defensin 114 (DEFB114).